We begin with the raw amino-acid sequence, 106 residues long: Large ribosomal subunit protein bL21 (106 aa).

This sequence belongs to the bacterial ribosomal protein bL21 family. Part of the 50S ribosomal subunit. Contacts protein L20.

Its function is as follows. This protein binds to 23S rRNA in the presence of protein L20. In Xanthomonas euvesicatoria pv. vesicatoria (strain 85-10) (Xanthomonas campestris pv. vesicatoria), this protein is Large ribosomal subunit protein bL21.